Here is a 159-residue protein sequence, read N- to C-terminus: uncharacterized protein (159 aa).

The next 2 helical transmembrane spans lie at 17–37 (ALFISAVLGLFCGLSFFTILV) and 40–60 (LLQFVFFFVIGLLIEYIFKKY).

Its subcellular location is the cell membrane. This is an uncharacterized protein from Borreliella burgdorferi (strain ATCC 35210 / DSM 4680 / CIP 102532 / B31) (Borrelia burgdorferi).